Reading from the N-terminus, the 261-residue chain is 3-deoxy-manno-octulosonate cytidylyltransferase (261 aa).

The protein belongs to the KdsB family.

It localises to the cytoplasm. The catalysed reaction is 3-deoxy-alpha-D-manno-oct-2-ulosonate + CTP = CMP-3-deoxy-beta-D-manno-octulosonate + diphosphate. It functions in the pathway nucleotide-sugar biosynthesis; CMP-3-deoxy-D-manno-octulosonate biosynthesis; CMP-3-deoxy-D-manno-octulosonate from 3-deoxy-D-manno-octulosonate and CTP: step 1/1. It participates in bacterial outer membrane biogenesis; lipopolysaccharide biosynthesis. In terms of biological role, activates KDO (a required 8-carbon sugar) for incorporation into bacterial lipopolysaccharide in Gram-negative bacteria. This Marinobacter nauticus (strain ATCC 700491 / DSM 11845 / VT8) (Marinobacter aquaeolei) protein is 3-deoxy-manno-octulosonate cytidylyltransferase.